We begin with the raw amino-acid sequence, 523 residues long: MTNIHYHKILILDFGSQYTQLIARRVREIGVYCELWAWDVTEQQIREFAPTGIILSGSPESTTEENSPRAPEYVFNAGVPVLGICYGMQTMAMQLGGLTETSDHREFGYASVSLENSTALFANLNDNLTASEPKLDVWMSHGDKVTRLPENFKVTGTTLTCPIAAMSDESRRFYGVQFHPEVTHTKKGLELLTNFVVNICGCETKWTAENIIEDAVARIKEQVGDDEVILGLSGGVDSSVVALLLHRAIGKNLHCVFVDNGLLRLHEGDQVMEMFGDKFGLNITRVDAESRFLGELAGVSDPEAKRKIIGKVFVDVFDDESKKLTNVKWLAQGTIYPDVIESAASKTGKAHVIKSHHNVGGLPDYMKLGLVEPLRELFKDEVRKIGLALGLPAEMINRHPFPGPGLGVRVLGEVKKEYCDLLRRADAIFIEELRNSGWYEKTSQAFSVFLPVKSVGVMGDGRKYDWVISLRAVETIDFMTAHWAHLPYDLLGKVSNRIINEVNGISRVVYDISGKPPATIEWE.

The Glutamine amidotransferase type-1 domain occupies 8–205 (KILILDFGSQ…VVNICGCETK (198 aa)). Cys-85 acts as the Nucleophile in catalysis. Catalysis depends on residues His-179 and Glu-181. A GMPS ATP-PPase domain is found at 206 to 398 (WTAENIIEDA…LGLPAEMINR (193 aa)). An ATP-binding site is contributed by 233 to 239 (SGGVDSS).

In terms of assembly, homodimer.

It catalyses the reaction XMP + L-glutamine + ATP + H2O = GMP + L-glutamate + AMP + diphosphate + 2 H(+). Its pathway is purine metabolism; GMP biosynthesis; GMP from XMP (L-Gln route): step 1/1. In terms of biological role, catalyzes the synthesis of GMP from XMP. The polypeptide is GMP synthase [glutamine-hydrolyzing] (guaA) (Haemophilus influenzae (strain ATCC 51907 / DSM 11121 / KW20 / Rd)).